A 303-amino-acid chain; its full sequence is N-acetyl-D-glucosamine kinase (303 aa).

Residues 4 to 11 and 133 to 140 contribute to the ATP site; these read GFDIGGTK and GVGGGLVF. Zn(2+) contacts are provided by H157, C177, C179, and C184.

This sequence belongs to the ROK (NagC/XylR) family. NagK subfamily.

It catalyses the reaction N-acetyl-D-glucosamine + ATP = N-acetyl-D-glucosamine 6-phosphate + ADP + H(+). It participates in cell wall biogenesis; peptidoglycan recycling. Its function is as follows. Catalyzes the phosphorylation of N-acetyl-D-glucosamine (GlcNAc) derived from cell-wall degradation, yielding GlcNAc-6-P. The sequence is that of N-acetyl-D-glucosamine kinase from Shigella flexneri serotype 5b (strain 8401).